A 586-amino-acid chain; its full sequence is Asparagine synthetase [glutamine-hydrolyzing] (586 aa).

The active-site For GATase activity is the Cys2. Positions 2–185 constitute a Glutamine amidotransferase type-2 domain; sequence CGILAVLGCS…PGHLYSSKSG (184 aa). L-glutamine-binding positions include 50-54, 75-77, and Asp98; these read RLAII and NGE. An Asparagine synthetase domain is found at 194–517; it reads PPWFNESVPS…PQNSARLTVP (324 aa). ATP-binding positions include Leu232, Val268, and 342 to 343; that span reads SG.

This sequence belongs to the asparagine synthetase family.

It catalyses the reaction L-aspartate + L-glutamine + ATP + H2O = L-asparagine + L-glutamate + AMP + diphosphate + H(+). Its pathway is amino-acid biosynthesis; L-asparagine biosynthesis; L-asparagine from L-aspartate (L-Gln route): step 1/1. In Brassica oleracea (Wild cabbage), this protein is Asparagine synthetase [glutamine-hydrolyzing].